Here is a 181-residue protein sequence, read N- to C-terminus: Regulator of G-protein signaling 10 (181 aa).

Residues 1–32 (MFNRAVSRLSRKRPPSDIHDSDGSSSSSHQSL) form a disordered region. Positions 23–32 (GSSSSSHQSL) are enriched in low complexity. 2 positions are modified to phosphoserine: Ser-24 and Ser-41. The region spanning 41–156 (SLENLLEDPE…LKSDLFLKHK (116 aa)) is the RGS domain. Cys-74 carries S-palmitoyl cysteine lipidation. Positions 158 to 181 (TEEEEEDLPDAQTAAKRASRIYNT) are disordered. Residue Ser-176 is modified to Phosphoserine.

As to quaternary structure, interacts with GNAZ, GNAI1 and GNAI3. Associates specifically with the activated, GTP-bound forms of GNAZ and GNAI3.

Its subcellular location is the cytoplasm. It localises to the cytosol. It is found in the nucleus. Its function is as follows. Regulates G protein-coupled receptor signaling cascades, including signaling downstream of the muscarinic acetylcholine receptor CHRM2. Inhibits signal transduction by increasing the GTPase activity of G protein alpha subunits, thereby driving them into their inactive GDP-bound form. Modulates the activity of potassium channels that are activated in response to CHRM2 signaling. Activity on GNAZ is inhibited by palmitoylation of the G-protein. This Homo sapiens (Human) protein is Regulator of G-protein signaling 10 (RGS10).